The following is a 138-amino-acid chain: Acidic phospholipase A2 1 (138 aa).

A signal peptide spans 1–16 (MRTLWIVAVWLMGVEG). 7 disulfide bridges follow: Cys-42–Cys-131, Cys-44–Cys-60, Cys-59–Cys-111, Cys-65–Cys-138, Cys-66–Cys-104, Cys-73–Cys-97, and Cys-91–Cys-102. 3 residues coordinate Ca(2+): Tyr-43, Gly-45, and Gly-47. Residue His-63 is part of the active site. Asp-64 is a binding site for Ca(2+). Asp-105 is an active-site residue.

As to quaternary structure, monomer. Ca(2+) is required as a cofactor. As to expression, expressed by the venom gland.

The protein localises to the secreted. It carries out the reaction a 1,2-diacyl-sn-glycero-3-phosphocholine + H2O = a 1-acyl-sn-glycero-3-phosphocholine + a fatty acid + H(+). Its function is as follows. Snake venom phospholipase that inhibits ADP- and collagen-induced human platelet aggregation. This inhibition is completely inhibited by abolition of catalytic activity in case of collagen as inducer and partially inhibited in case of ADP as inducer. PLA2 catalyzes the calcium-dependent hydrolysis of the 2-acyl groups in 3-sn-phosphoglycerides. The protein is Acidic phospholipase A2 1 of Macrovipera lebetinus (Levantine viper).